Reading from the N-terminus, the 710-residue chain is multidrug resistance regulator 2 (710 aa).

The zn(2)-C6 fungal-type DNA-binding region spans 11-37; that stretch reads CDACRSRKIKCNRQTPCASCHKSKRDC. 2 helical membrane passes run 475-495 and 525-545; these read DLVI…LYLF and LFLA…TNFL.

It localises to the nucleus. The protein localises to the membrane. Functionally, transcription factor that controls the expression of CDR1, the major multidrug efflux pump. Required for yeast cell adherence to silicone substrate and plays a role in virulence. The chain is multidrug resistance regulator 2 from Candida albicans (strain SC5314 / ATCC MYA-2876) (Yeast).